Consider the following 196-residue polypeptide: Holliday junction branch migration complex subunit RuvA (196 aa).

The interval 1-63 is domain I; sequence MYDYIKGILT…EDAHLLYGFA (63 aa). Residues 64–142 are domain II; sequence TENEKSVFLS…MSEEAGPVQQ (79 aa). Positions 142 to 146 are flexible linker; it reads QVAPS. The domain III stretch occupies residues 147-196; it reads SENIALEEAMEAMEALGYRPAELKKIKKFFEGTNDTAENYIKSALKMLMK.

Belongs to the RuvA family. Homotetramer. Forms an RuvA(8)-RuvB(12)-Holliday junction (HJ) complex. HJ DNA is sandwiched between 2 RuvA tetramers; dsDNA enters through RuvA and exits via RuvB. An RuvB hexamer assembles on each DNA strand where it exits the tetramer. Each RuvB hexamer is contacted by two RuvA subunits (via domain III) on 2 adjacent RuvB subunits; this complex drives branch migration. In the full resolvosome a probable DNA-RuvA(4)-RuvB(12)-RuvC(2) complex forms which resolves the HJ.

The protein resides in the cytoplasm. In terms of biological role, the RuvA-RuvB-RuvC complex processes Holliday junction (HJ) DNA during genetic recombination and DNA repair, while the RuvA-RuvB complex plays an important role in the rescue of blocked DNA replication forks via replication fork reversal (RFR). RuvA specifically binds to HJ cruciform DNA, conferring on it an open structure. The RuvB hexamer acts as an ATP-dependent pump, pulling dsDNA into and through the RuvAB complex. HJ branch migration allows RuvC to scan DNA until it finds its consensus sequence, where it cleaves and resolves the cruciform DNA. The sequence is that of Holliday junction branch migration complex subunit RuvA from Streptococcus suis (strain 98HAH33).